The chain runs to 376 residues: Carbamoyl phosphate synthase small chain (376 aa).

Residues Met-1–Asn-183 form a CPSase region. Residues Ser-51, Gly-235, and Gly-237 each coordinate L-glutamine. Residues Asn-187–Asn-374 form the Glutamine amidotransferase type-1 domain. The active-site Nucleophile is the Cys-263. Residues Leu-264, Gln-267, Asn-305, and Phe-308 each contribute to the L-glutamine site. Residues His-347 and Glu-349 contribute to the active site.

The protein belongs to the CarA family. As to quaternary structure, composed of two chains; the small (or glutamine) chain promotes the hydrolysis of glutamine to ammonia, which is used by the large (or ammonia) chain to synthesize carbamoyl phosphate. Tetramer of heterodimers (alpha,beta)4.

It catalyses the reaction hydrogencarbonate + L-glutamine + 2 ATP + H2O = carbamoyl phosphate + L-glutamate + 2 ADP + phosphate + 2 H(+). The enzyme catalyses L-glutamine + H2O = L-glutamate + NH4(+). It participates in amino-acid biosynthesis; L-arginine biosynthesis; carbamoyl phosphate from bicarbonate: step 1/1. Its pathway is pyrimidine metabolism; UMP biosynthesis via de novo pathway; (S)-dihydroorotate from bicarbonate: step 1/3. Functionally, small subunit of the glutamine-dependent carbamoyl phosphate synthetase (CPSase). CPSase catalyzes the formation of carbamoyl phosphate from the ammonia moiety of glutamine, carbonate, and phosphate donated by ATP, constituting the first step of 2 biosynthetic pathways, one leading to arginine and/or urea and the other to pyrimidine nucleotides. The small subunit (glutamine amidotransferase) binds and cleaves glutamine to supply the large subunit with the substrate ammonia. The polypeptide is Carbamoyl phosphate synthase small chain (Wigglesworthia glossinidia brevipalpis).